The chain runs to 206 residues: LexA repressor (206 aa).

The H-T-H motif DNA-binding region spans 29-49; sequence VREICEAVGLRSTSTVHGHLA. Residues serine 130 and lysine 167 each act as for autocatalytic cleavage activity in the active site.

This sequence belongs to the peptidase S24 family. As to quaternary structure, homodimer.

It carries out the reaction Hydrolysis of Ala-|-Gly bond in repressor LexA.. In terms of biological role, represses a number of genes involved in the response to DNA damage (SOS response), including recA and lexA. In the presence of single-stranded DNA, RecA interacts with LexA causing an autocatalytic cleavage which disrupts the DNA-binding part of LexA, leading to derepression of the SOS regulon and eventually DNA repair. The sequence is that of LexA repressor from Alkaliphilus oremlandii (strain OhILAs) (Clostridium oremlandii (strain OhILAs)).